The chain runs to 309 residues: Phytoene synthase (309 aa).

It belongs to the phytoene/squalene synthase family. The cofactor is ATP. Mn(2+) serves as cofactor. It depends on Mg(2+) as a cofactor.

It functions in the pathway carotenoid biosynthesis; phytoene biosynthesis. Its function is as follows. Involved in the biosynthesis of carotenoids. Catalyzes the condensation of two molecules of geranylgeranyl diphosphate (GGPP) to give prephytoene diphosphate (PPPP) and the subsequent rearrangement of the cyclopropylcarbinyl intermediate to yield phytoene. This Pseudescherichia vulneris (Escherichia vulneris) protein is Phytoene synthase (crtB).